The following is a 297-amino-acid chain: NADH-ubiquinone oxidoreductase chain 1 (297 aa).

9 helical membrane-spanning segments follow: residues M1–E21, P34–L54, W66–I86, L99–G119, V139–L159, G170–A190, L206–A228, T235–R257, and L277–F297.

It belongs to the complex I subunit 1 family.

The protein resides in the mitochondrion inner membrane. It carries out the reaction a ubiquinone + NADH + 5 H(+)(in) = a ubiquinol + NAD(+) + 4 H(+)(out). Core subunit of the mitochondrial membrane respiratory chain NADH dehydrogenase (Complex I) that is believed to belong to the minimal assembly required for catalysis. Complex I functions in the transfer of electrons from NADH to the respiratory chain. The immediate electron acceptor for the enzyme is believed to be ubiquinone. The protein is NADH-ubiquinone oxidoreductase chain 1 of Hyaloraphidium curvatum (Lower fungus).